The following is a 565-amino-acid chain: UvrABC system protein C (565 aa).

Residues 12–89 form the GIY-YIG domain; sequence EEPGVYIFKN…IRTHKPKYNV (78 aa). The region spanning 195–230 is the UVR domain; the sequence is KDVLPTLYEKIEQYASNLAFEKAAFLRDQVLVLQNI.

It belongs to the UvrC family. Interacts with UvrB in an incision complex.

The protein resides in the cytoplasm. In terms of biological role, the UvrABC repair system catalyzes the recognition and processing of DNA lesions. UvrC both incises the 5' and 3' sides of the lesion. The N-terminal half is responsible for the 3' incision and the C-terminal half is responsible for the 5' incision. The polypeptide is UvrABC system protein C (Hydrogenobaculum sp. (strain Y04AAS1)).